The primary structure comprises 483 residues: Glycogen synthase (483 aa).

Lys-15 serves as a coordination point for ADP-alpha-D-glucose.

It belongs to the glycosyltransferase 1 family. Bacterial/plant glycogen synthase subfamily.

The catalysed reaction is [(1-&gt;4)-alpha-D-glucosyl](n) + ADP-alpha-D-glucose = [(1-&gt;4)-alpha-D-glucosyl](n+1) + ADP + H(+). Its pathway is glycan biosynthesis; glycogen biosynthesis. Functionally, synthesizes alpha-1,4-glucan chains using ADP-glucose. This chain is Glycogen synthase, found in Desulfatibacillum aliphaticivorans.